A 496-amino-acid chain; its full sequence is Fizzy-related protein homolog (496 aa).

Disordered stretches follow at residues 28 to 51, 64 to 88, and 105 to 166; these read RRTL…FIPS, INEN…GKDG, and EKVQ…SPRK. Residue threonine 32 is modified to Phosphothreonine. Polar residues predominate over residues 32–42; that stretch reads TPASSPVSSPS. Serine 36 carries the post-translational modification Phosphoserine. Positions 47–52 are involved in APC/FZR1 E3 ubiquitin-protein ligase complex activity; that stretch reads RFIPSR. Lysine 69 bears the N6-acetyllysine mark. Basic and acidic residues-rich tracts occupy residues 76-86 and 106-126; these read KAKDATSDNGK and KVQD…EKKG. 4 positions are modified to phosphoserine: serine 133, serine 138, serine 146, and serine 151. Residues 146-160 show a composition bias toward polar residues; the sequence is SPYSLSPVSNKSQKL. The residue at position 159 (lysine 159) is an N6-acetyllysine. WD repeat units lie at residues 182–222, 227–266, 269–306, 311–350, 353–395, 397–438, and 441–480; these read PELQ…VTRL, VEGD…KLSM, GHTA…LQSE, GHRQ…PVQQ, EHLA…PLQC, DTGS…QVAK, and GHSY…RSTK.

This sequence belongs to the WD repeat CDC20/Fizzy family. In terms of assembly, the unphosphorylated form interacts with APC/C during mitosis. Interacts with NINL. Interacts (in complex with the anaphase promoting complex APC) with MAD2L2; inhibits FZR1-mediated APC/C activation. Interacts with SIRT2 and USP37. Interacts (via WD repeats) with MAK. Interacts with RBBP8/CtIP; this interaction leads to RBBP8 proteasomal degradation. Interacts with HECW2. Interacts with SASS6; the interaction is regulated by CENATAC and leads to SASS6 proteasomal degradation. Interacts (via N-terminus) with CCNF. Interacts with CDC6. Interacts with TK1 (via the KEN box). Acetylated. Deacetylated by SIRT2 at Lys-69 and Lys-159; deacetylation enhances the interaction of FZR1 with CDC27, leading to activation of anaphase promoting complex/cyclosome (APC/C). Post-translationally, following DNA damage, it is dephosphorylated by CDC14B in G2 phase, leading to its reassociation with the APC/C, and allowing an efficient G2 DNA damage checkpoint. Phosphorylated by MAK. In terms of processing, ubiquitinated by the SCF(CCNF) E3 ubiquitin-protein ligase complex; leading to its degradation by the proteasome. In terms of tissue distribution, isoform 2 is expressed at high levels in heart, liver, spleen and some cancer cell lines whereas isoform 3 is expressed only at low levels in these tissues.

The protein localises to the nucleus. It localises to the cytoplasm. It participates in protein modification; protein ubiquitination. Functionally, substrate-specific adapter for the anaphase promoting complex/cyclosome (APC/C) E3 ubiquitin-protein ligase complex. Associates with the APC/C in late mitosis, in replacement of CDC20, and activates the APC/C during anaphase and telophase. The APC/C remains active in degrading substrates to ensure that positive regulators of the cell cycle do not accumulate prematurely. At the G1/S transition FZR1 is phosphorylated, leading to its dissociation from the APC/C. Following DNA damage, it is required for the G2 DNA damage checkpoint: its dephosphorylation and reassociation with the APC/C leads to the ubiquitination of PLK1, preventing entry into mitosis. Acts as an adapter for APC/C to target the DNA-end resection factor RBBP8/CtIP for ubiquitination and subsequent proteasomal degradation. Through the regulation of RBBP8/CtIP protein turnover, may play a role in DNA damage response, favoring DNA double-strand repair through error-prone non-homologous end joining (NHEJ) over error-free, RBBP8-mediated homologous recombination (HR). The polypeptide is Fizzy-related protein homolog (Homo sapiens (Human)).